The following is a 379-amino-acid chain: Tubulin--tyrosine ligase (379 aa).

The TTL domain occupies 3 to 370; that stretch reads TFVVRDENSS…PPDAEQQQQQ (368 aa).

The protein belongs to the tubulin--tyrosine ligase family. As to quaternary structure, monomer. Mg(2+) serves as cofactor. It depends on K(+) as a cofactor.

The catalysed reaction is C-terminal L-alpha-aminoacyl-L-glutamyl-L-glutamyl-[tubulin] + L-tyrosine + ATP = C-terminal L-alpha-aminoacyl-L-glutamyl-L-glutamyl-L-tyrosyl-[tubulin] + ADP + phosphate + H(+). Functionally, catalyzes the post-translational addition of a tyrosine to the C-terminal end of detyrosinated alpha-tubulin. The protein is Tubulin--tyrosine ligase (TTL) of Sus scrofa (Pig).